The primary structure comprises 933 residues: Serine/threonine-protein kinase PknD (933 aa).

A Protein kinase domain is found at 4-291; that stretch reads YDIIRMIGKG…ALKADIEQHL (288 aa). Residues 10–18 and Lys33 contribute to the ATP site; that span reads IGKGGMGEV. Residue Asp138 is the Proton acceptor of the active site.

The protein belongs to the protein kinase superfamily. Ser/Thr protein kinase family. In terms of processing, autophosphorylated on serine and threonine residues.

The catalysed reaction is L-seryl-[protein] + ATP = O-phospho-L-seryl-[protein] + ADP + H(+). It catalyses the reaction L-threonyl-[protein] + ATP = O-phospho-L-threonyl-[protein] + ADP + H(+). Its function is as follows. Together with the serine/threonine kinase Pkn1, may play a role in the specific interactions with host proteins during intracellular growth. The protein is Serine/threonine-protein kinase PknD of Chlamydia abortus (strain DSM 27085 / S26/3) (Chlamydophila abortus).